We begin with the raw amino-acid sequence, 300 residues long: NAD kinase (300 aa).

Asp75 functions as the Proton acceptor in the catalytic mechanism. Residues 75–76, 149–150, Arg177, Asp179, 190–195, Ala214, and Gln248 each bind NAD(+); these read DG, ND, and TAYALS.

The protein belongs to the NAD kinase family. Requires a divalent metal cation as cofactor.

It localises to the cytoplasm. The enzyme catalyses NAD(+) + ATP = ADP + NADP(+) + H(+). In terms of biological role, involved in the regulation of the intracellular balance of NAD and NADP, and is a key enzyme in the biosynthesis of NADP. Catalyzes specifically the phosphorylation on 2'-hydroxyl of the adenosine moiety of NAD to yield NADP. This is NAD kinase from Burkholderia lata (strain ATCC 17760 / DSM 23089 / LMG 22485 / NCIMB 9086 / R18194 / 383).